The chain runs to 449 residues: Ribulose bisphosphate carboxylase large chain (449 aa).

Residues 1 to 2 (MS) constitute a propeptide that is removed on maturation. Proline 3 is modified (N-acetylproline). The residue at position 14 (lysine 14) is an N6,N6,N6-trimethyllysine. Residues asparagine 123 and threonine 173 each contribute to the substrate site. Lysine 175 (proton acceptor) is an active-site residue. Lysine 177 is a substrate binding site. 3 residues coordinate Mg(2+): lysine 201, aspartate 203, and glutamate 204. Lysine 201 is modified (N6-carboxylysine). The active-site Proton acceptor is the histidine 294. Residue 295, histidine 327, and serine 379 together coordinate substrate.

This sequence belongs to the RuBisCO large chain family. Type I subfamily. As to quaternary structure, heterohexadecamer of 8 large chains and 8 small chains; disulfide-linked. The disulfide link is formed within the large subunit homodimers. It depends on Mg(2+) as a cofactor. In terms of processing, the disulfide bond which can form in the large chain dimeric partners within the hexadecamer appears to be associated with oxidative stress and protein turnover.

The protein localises to the plastid. It localises to the chloroplast. It carries out the reaction 2 (2R)-3-phosphoglycerate + 2 H(+) = D-ribulose 1,5-bisphosphate + CO2 + H2O. It catalyses the reaction D-ribulose 1,5-bisphosphate + O2 = 2-phosphoglycolate + (2R)-3-phosphoglycerate + 2 H(+). Functionally, ruBisCO catalyzes two reactions: the carboxylation of D-ribulose 1,5-bisphosphate, the primary event in carbon dioxide fixation, as well as the oxidative fragmentation of the pentose substrate in the photorespiration process. Both reactions occur simultaneously and in competition at the same active site. The protein is Ribulose bisphosphate carboxylase large chain of Salacia pallescens.